A 1934-amino-acid polypeptide reads, in one-letter code: Pyruvate dehydrogenase [NADP(+)] (1934 aa).

4Fe-4S ferredoxin-type domains are found at residues 710–739 (SIPI…PFLL) and 767–796 (YRIQ…MEGL). 8 residues coordinate [4Fe-4S] cluster: cysteine 719, cysteine 722, cysteine 725, cysteine 729, cysteine 776, cysteine 779, cysteine 782, and cysteine 786. Positions 1288–1438 (MHVLYGTETG…ELIEWLPDYL (151 aa)) constitute a Flavodoxin-like domain. The 259-residue stretch at 1501 to 1759 (PNSVLLPVIE…NIKASAFNLP (259 aa)) folds into the FAD-binding FR-type domain. Residues 1542–1553 (YCLGDSLALYGQ) and 1685–1695 (IKSRSYSIASC) each bind FAD.

It in the N-terminal section; belongs to the pyruvate:ferredoxin/flavodoxin oxidoreductase family. In terms of assembly, homodimer. The cofactor is FAD. It depends on FMN as a cofactor. Requires thiamine diphosphate as cofactor.

The catalysed reaction is pyruvate + NADP(+) + CoA = acetyl-CoA + CO2 + NADPH. In terms of biological role, may have an important role in respiratory metabolism. Cryptosporidium have a relic mitochondrion with no function in energy metabolism so it is not known if PFOR has a function. The protein is Pyruvate dehydrogenase [NADP(+)] (PFOR) of Cryptosporidium parvum.